Reading from the N-terminus, the 165-residue chain is Cyclic pyranopterin monophosphate synthase (165 aa).

Residues 83-85 and 120-121 each bind substrate; these read FCH and ME. Residue aspartate 135 is part of the active site.

The protein belongs to the MoaC family. Homohexamer; trimer of dimers.

The catalysed reaction is (8S)-3',8-cyclo-7,8-dihydroguanosine 5'-triphosphate = cyclic pyranopterin phosphate + diphosphate. It functions in the pathway cofactor biosynthesis; molybdopterin biosynthesis. Its function is as follows. Catalyzes the conversion of (8S)-3',8-cyclo-7,8-dihydroguanosine 5'-triphosphate to cyclic pyranopterin monophosphate (cPMP). The chain is Cyclic pyranopterin monophosphate synthase from Xanthomonas campestris pv. campestris (strain 8004).